A 350-amino-acid chain; its full sequence is Lipoyl synthase, mitochondrial (350 aa).

Positions 83, 88, 94, 113, 117, 120, and 328 each coordinate [4Fe-4S] cluster. One can recognise a Radical SAM core domain in the interval 96 to 317 (GGESGTATAT…EKVGNELGFA (222 aa)).

It belongs to the radical SAM superfamily. Lipoyl synthase family. It depends on [4Fe-4S] cluster as a cofactor.

It localises to the mitochondrion. It carries out the reaction [[Fe-S] cluster scaffold protein carrying a second [4Fe-4S](2+) cluster] + N(6)-octanoyl-L-lysyl-[protein] + 2 oxidized [2Fe-2S]-[ferredoxin] + 2 S-adenosyl-L-methionine + 4 H(+) = [[Fe-S] cluster scaffold protein] + N(6)-[(R)-dihydrolipoyl]-L-lysyl-[protein] + 4 Fe(3+) + 2 hydrogen sulfide + 2 5'-deoxyadenosine + 2 L-methionine + 2 reduced [2Fe-2S]-[ferredoxin]. It participates in protein modification; protein lipoylation via endogenous pathway; protein N(6)-(lipoyl)lysine from octanoyl-[acyl-carrier-protein]: step 2/2. Functionally, catalyzes the radical-mediated insertion of two sulfur atoms into the C-6 and C-8 positions of the octanoyl moiety bound to the lipoyl domains of lipoate-dependent enzymes, thereby converting the octanoylated domains into lipoylated derivatives. In Trichoplax adhaerens (Trichoplax reptans), this protein is Lipoyl synthase, mitochondrial.